Consider the following 930-residue polypeptide: Isoleucine--tRNA ligase (930 aa).

The 'HIGH' region motif lies at 57–67; the sequence is PYANGNIHVGH. Glu554 serves as a coordination point for L-isoleucyl-5'-AMP. The short motif at 595–599 is the 'KMSKS' region element; that stretch reads KMSKS. Lys598 is an ATP binding site.

This sequence belongs to the class-I aminoacyl-tRNA synthetase family. IleS type 1 subfamily. Monomer.

The protein resides in the cytoplasm. It catalyses the reaction tRNA(Ile) + L-isoleucine + ATP = L-isoleucyl-tRNA(Ile) + AMP + diphosphate. Functionally, catalyzes the attachment of isoleucine to tRNA(Ile). As IleRS can inadvertently accommodate and process structurally similar amino acids such as valine, to avoid such errors it has two additional distinct tRNA(Ile)-dependent editing activities. One activity is designated as 'pretransfer' editing and involves the hydrolysis of activated Val-AMP. The other activity is designated 'posttransfer' editing and involves deacylation of mischarged Val-tRNA(Ile). In Streptococcus agalactiae serotype Ia (strain ATCC 27591 / A909 / CDC SS700), this protein is Isoleucine--tRNA ligase.